Reading from the N-terminus, the 384-residue chain is MKAVHFGAGNIGRGFVGLLLHQAGYELVFADVAEELISQLAAADSYDVHEVGDNPTVRTVDNFRALNSATQEADVVAEIATADVVTTAVGPHILKFVAPVIAKGIAARAAGLAPLQVMACENAINATDILRDEVAAQWDPAAGPLEAVAVFANTAVDRIVPNQEPGKGLDVTVETFYEWVIDRTPFGDNVPVIPGATFVDNLEPYIERKLFTVNTGHAAAAYFGFEAGLSKISEAMADQDVAADVRAVLDETKELLIHKHGFNREEQEAYVEKILGRFTNPHLPDTVNRVGRAPLRKLSRHERFIGPAAELAERGIVPEALLGAIAAALRFNDPADAEAAELAQIVASSTAAEATEKVTGLTPGHPLFAAVEALVEEVKAEVKA.

Position 3–14 (3–14 (AVHFGAGNIGRG)) interacts with NAD(+).

It belongs to the mannitol dehydrogenase family.

The catalysed reaction is D-mannitol 1-phosphate + NAD(+) = beta-D-fructose 6-phosphate + NADH + H(+). In Arthrobacter sp. (strain FB24), this protein is Mannitol-1-phosphate 5-dehydrogenase.